The following is a 273-amino-acid chain: 2,3,4,5-tetrahydropyridine-2,6-dicarboxylate N-succinyltransferase (273 aa).

Substrate is bound by residues R104 and D141.

It belongs to the transferase hexapeptide repeat family. As to quaternary structure, homotrimer.

The protein resides in the cytoplasm. The catalysed reaction is (S)-2,3,4,5-tetrahydrodipicolinate + succinyl-CoA + H2O = (S)-2-succinylamino-6-oxoheptanedioate + CoA. It participates in amino-acid biosynthesis; L-lysine biosynthesis via DAP pathway; LL-2,6-diaminopimelate from (S)-tetrahydrodipicolinate (succinylase route): step 1/3. The protein is 2,3,4,5-tetrahydropyridine-2,6-dicarboxylate N-succinyltransferase of Nitrosospira multiformis (strain ATCC 25196 / NCIMB 11849 / C 71).